The chain runs to 120 residues: MFLLYEYDIFWAFLLISSAIPVLAFLISGVLSPIRKGPEKLSSYESGIEPIGDAWLQFRIRYYMFALVFVVFDVETVFLYPWAMSFDVLGVSAFIEAFIFVLILILGLVYAWRKGALEWS.

Transmembrane regions (helical) follow at residues 9–29, 64–84, and 88–108; these read IFWAFLLISSAIPVLAFLISG, MFALVFVVFDVETVFLYPWAM, and VLGVSAFIEAFIFVLILILGL.

Belongs to the complex I subunit 3 family. As to quaternary structure, NDH is composed of at least 16 different subunits, 5 of which are encoded in the nucleus.

The protein localises to the plastid. It is found in the chloroplast thylakoid membrane. It catalyses the reaction a plastoquinone + NADH + (n+1) H(+)(in) = a plastoquinol + NAD(+) + n H(+)(out). It carries out the reaction a plastoquinone + NADPH + (n+1) H(+)(in) = a plastoquinol + NADP(+) + n H(+)(out). Its function is as follows. NDH shuttles electrons from NAD(P)H:plastoquinone, via FMN and iron-sulfur (Fe-S) centers, to quinones in the photosynthetic chain and possibly in a chloroplast respiratory chain. The immediate electron acceptor for the enzyme in this species is believed to be plastoquinone. Couples the redox reaction to proton translocation, and thus conserves the redox energy in a proton gradient. The protein is NAD(P)H-quinone oxidoreductase subunit 3, chloroplastic of Arabidopsis thaliana (Mouse-ear cress).